We begin with the raw amino-acid sequence, 260 residues long: 3'-5' ssDNA/RNA exonuclease TatD (260 aa).

The a divalent metal cation site is built by Glu-91, His-127, and His-152.

Belongs to the metallo-dependent hydrolases superfamily. TatD-type hydrolase family. TatD subfamily. In terms of assembly, monomer. Mg(2+) serves as cofactor.

The protein localises to the cytoplasm. In terms of biological role, 3'-5' exonuclease that prefers single-stranded DNA and RNA. May play a role in the H(2)O(2)-induced DNA damage repair. In Shigella flexneri serotype 5b (strain 8401), this protein is 3'-5' ssDNA/RNA exonuclease TatD.